The chain runs to 327 residues: Phenylalanine--tRNA ligase alpha subunit (327 aa).

Glutamate 252 is a Mg(2+) binding site.

The protein belongs to the class-II aminoacyl-tRNA synthetase family. Phe-tRNA synthetase alpha subunit type 1 subfamily. Tetramer of two alpha and two beta subunits. Requires Mg(2+) as cofactor.

It localises to the cytoplasm. It catalyses the reaction tRNA(Phe) + L-phenylalanine + ATP = L-phenylalanyl-tRNA(Phe) + AMP + diphosphate + H(+). In Vibrio vulnificus (strain CMCP6), this protein is Phenylalanine--tRNA ligase alpha subunit.